Reading from the N-terminus, the 87-residue chain is Large ribosomal subunit protein uL23c (87 aa).

It belongs to the universal ribosomal protein uL23 family. As to quaternary structure, part of the 50S ribosomal subunit.

The protein resides in the plastid. Its subcellular location is the chloroplast. In terms of biological role, binds to 23S rRNA. This Ostreococcus tauri protein is Large ribosomal subunit protein uL23c (rpl23).